The sequence spans 640 residues: 1-deoxy-D-xylulose-5-phosphate synthase (640 aa).

Residues histidine 79 and 120 to 122 (AHS) contribute to the thiamine diphosphate site. Aspartate 151 is a binding site for Mg(2+). Thiamine diphosphate contacts are provided by residues 152–153 (GA), asparagine 180, tyrosine 289, and glutamate 371. Position 180 (asparagine 180) interacts with Mg(2+).

It belongs to the transketolase family. DXPS subfamily. Homodimer. The cofactor is Mg(2+). It depends on thiamine diphosphate as a cofactor.

It catalyses the reaction D-glyceraldehyde 3-phosphate + pyruvate + H(+) = 1-deoxy-D-xylulose 5-phosphate + CO2. It functions in the pathway metabolic intermediate biosynthesis; 1-deoxy-D-xylulose 5-phosphate biosynthesis; 1-deoxy-D-xylulose 5-phosphate from D-glyceraldehyde 3-phosphate and pyruvate: step 1/1. Functionally, catalyzes the acyloin condensation reaction between C atoms 2 and 3 of pyruvate and glyceraldehyde 3-phosphate to yield 1-deoxy-D-xylulose-5-phosphate (DXP). The protein is 1-deoxy-D-xylulose-5-phosphate synthase of Novosphingobium aromaticivorans (strain ATCC 700278 / DSM 12444 / CCUG 56034 / CIP 105152 / NBRC 16084 / F199).